The sequence spans 265 residues: Putative N(omega)-hydroxy-L-arginine synthase DcsA (265 aa).

This sequence belongs to the DcsA family. The cofactor is heme.

Its function is as follows. Involved in the biosynthesis of the antibiotic D-cycloserine (DCS), a cyclic structural analog of D-alanine, used as an antitubercular agent. Could catalyze the production of N(omega)-hydroxy-L-arginine (NHA) from L-arginine. The polypeptide is Putative N(omega)-hydroxy-L-arginine synthase DcsA (Streptomyces lavendulae).